The sequence spans 449 residues: Probable magnetosome protein Mms48 (449 aa).

An N-terminal signal peptide occupies residues 1–18; sequence MLLRLIVLLIFMSPVVFA. Residues 40–60 traverse the membrane as a helical segment; it reads SNMPVLLAVILVVFLIFSALS. The stretch at 323–356 is one TPR repeat; sequence PDGHLAAGEAAFAVQKWGVARRHIMAALKIAPDA.

It localises to the magnetosome membrane. Its function is as follows. Overexpression in wild-type cells increases the number of cells with double magnetosome chains significantly. The 4 genes of this operon collectively influence magnetosome size and number. The protein is Probable magnetosome protein Mms48 of Magnetospirillum gryphiswaldense (strain DSM 6361 / JCM 21280 / NBRC 15271 / MSR-1).